Here is a 329-residue protein sequence, read N- to C-terminus: Centromere protein L (329 aa).

S40 and S54 each carry phosphoserine.

Belongs to the CENP-L/IML3 family. As to quaternary structure, component of the CENPA-CAD complex, composed of CENPI, CENPK, CENPL, CENPO, CENPP, CENPQ, CENPR and CENPS. The CENPA-CAD complex interacts with the CENPA-NAC complex, at least composed of CENPA, CENPC, CENPH, CENPM, CENPN, CENPT and CENPU.

It localises to the nucleus. It is found in the chromosome. Its subcellular location is the centromere. Component of the CENPA-CAD (nucleosome distal) complex, a complex recruited to centromeres which is involved in assembly of kinetochore proteins, mitotic progression and chromosome segregation. May be involved in incorporation of newly synthesized CENPA into centromeres via its interaction with the CENPA-NAC complex. This Mus musculus (Mouse) protein is Centromere protein L (Cenpl).